A 464-amino-acid polypeptide reads, in one-letter code: UDP-N-acetylmuramate--L-alanine ligase (464 aa).

118–124 is a binding site for ATP; it reads GTHGKTT.

Belongs to the MurCDEF family.

It is found in the cytoplasm. It catalyses the reaction UDP-N-acetyl-alpha-D-muramate + L-alanine + ATP = UDP-N-acetyl-alpha-D-muramoyl-L-alanine + ADP + phosphate + H(+). Its pathway is cell wall biogenesis; peptidoglycan biosynthesis. Functionally, cell wall formation. The protein is UDP-N-acetylmuramate--L-alanine ligase of Dinoroseobacter shibae (strain DSM 16493 / NCIMB 14021 / DFL 12).